The primary structure comprises 388 residues: DNA replication and repair protein RecF (388 aa).

Position 30 to 37 (30 to 37 (GNNAQGKS)) interacts with ATP.

This sequence belongs to the RecF family.

It localises to the cytoplasm. In terms of biological role, the RecF protein is involved in DNA metabolism; it is required for DNA replication and normal SOS inducibility. RecF binds preferentially to single-stranded, linear DNA. It also seems to bind ATP. This is DNA replication and repair protein RecF from Picosynechococcus sp. (strain ATCC 27264 / PCC 7002 / PR-6) (Agmenellum quadruplicatum).